Here is a 421-residue protein sequence, read N- to C-terminus: ATP-dependent RNA helicase RhlB (421 aa).

The Q motif signature appears at 9–37 (QKFSDFALHPQVVEALEKKRFYNCTPIQA). Positions 40-219 (LPLTLAGRDV…FEQMNNAEYV (180 aa)) constitute a Helicase ATP-binding domain. An ATP-binding site is contributed by 53–60 (AQTGTGKT). A DEAD box motif is present at residues 165-168 (DEAD). In terms of domain architecture, Helicase C-terminal spans 245 to 390 (RLLQTLIEEE…VSKYNPEALM (146 aa)). The disordered stretch occupies residues 396 to 421 (PLRLTRSRPGNGPRRAGAPRNRRRSG). The segment covering 402 to 414 (SRPGNGPRRAGAP) has biased composition (low complexity).

Belongs to the DEAD box helicase family. RhlB subfamily. As to quaternary structure, component of the RNA degradosome, which is a multiprotein complex involved in RNA processing and mRNA degradation.

The protein localises to the cytoplasm. The catalysed reaction is ATP + H2O = ADP + phosphate + H(+). Functionally, DEAD-box RNA helicase involved in RNA degradation. Has RNA-dependent ATPase activity and unwinds double-stranded RNA. The sequence is that of ATP-dependent RNA helicase RhlB from Salmonella dublin (strain CT_02021853).